We begin with the raw amino-acid sequence, 201 residues long: Recombination protein RecR (201 aa).

The C4-type zinc finger occupies C57 to C72. One can recognise a Toprim domain in the interval G81–P176.

The protein belongs to the RecR family.

Functionally, may play a role in DNA repair. It seems to be involved in an RecBC-independent recombinational process of DNA repair. It may act with RecF and RecO. This Erwinia tasmaniensis (strain DSM 17950 / CFBP 7177 / CIP 109463 / NCPPB 4357 / Et1/99) protein is Recombination protein RecR.